The following is a 448-amino-acid chain: Exodeoxyribonuclease 7 large subunit (448 aa).

The protein belongs to the XseA family. As to quaternary structure, heterooligomer composed of large and small subunits.

The protein localises to the cytoplasm. It catalyses the reaction Exonucleolytic cleavage in either 5'- to 3'- or 3'- to 5'-direction to yield nucleoside 5'-phosphates.. In terms of biological role, bidirectionally degrades single-stranded DNA into large acid-insoluble oligonucleotides, which are then degraded further into small acid-soluble oligonucleotides. The protein is Exodeoxyribonuclease 7 large subunit of Hamiltonella defensa subsp. Acyrthosiphon pisum (strain 5AT).